The chain runs to 311 residues: tRNA dimethylallyltransferase 2 (311 aa).

Residue Gly-15 to Thr-22 coordinates ATP. Substrate is bound at residue Thr-17–Thr-22. The interaction with substrate tRNA stretch occupies residues Asp-40 to Gln-43.

The protein belongs to the IPP transferase family. As to quaternary structure, monomer. It depends on Mg(2+) as a cofactor.

The enzyme catalyses adenosine(37) in tRNA + dimethylallyl diphosphate = N(6)-dimethylallyladenosine(37) in tRNA + diphosphate. Its function is as follows. Catalyzes the transfer of a dimethylallyl group onto the adenine at position 37 in tRNAs that read codons beginning with uridine, leading to the formation of N6-(dimethylallyl)adenosine (i(6)A). This is tRNA dimethylallyltransferase 2 from Syntrophus aciditrophicus (strain SB).